A 314-amino-acid chain; its full sequence is MLPSNITSTHPAVFLLVGIPGLEHLHAWISIPFCFAYTLALLGNCTLLFIIQADAALHEPMYLFLAMLATIDLVLSSTTLPKMLAIFWFRDQEINFFACLVQMFFLHSFSIMESAVLLAMAFDRYVAICKPLHYTTVLTGSLITKIGMAAVARAVTLMTPLPFLLRRFHYCRGPVIAHCYCEHMAVVRLACGDTSFNNIYGIAVAMFIVVLDLLFVILSYVFILQAVLQLASQEARYKAFGTCVSHIGAILSTYTPVVISSVMHRVARHAAPRVHILLAIFYLLFPPMVNPIIYGVKTKQIREYVLSLFQRKNM.

Residues 1-27 (MLPSNITSTHPAVFLLVGIPGLEHLHA) are Extracellular-facing. Asn-5 carries an N-linked (GlcNAc...) asparagine glycan. Residues 28–48 (WISIPFCFAYTLALLGNCTLL) form a helical membrane-spanning segment. The Cytoplasmic segment spans residues 49–56 (FIIQADAA). Residues 57-77 (LHEPMYLFLAMLATIDLVLSS) traverse the membrane as a helical segment. Residues 78-101 (TTLPKMLAIFWFRDQEINFFACLV) lie on the Extracellular side of the membrane. Cys-99 and Cys-191 are joined by a disulfide. Residues 102–122 (QMFFLHSFSIMESAVLLAMAF) traverse the membrane as a helical segment. The Cytoplasmic segment spans residues 123–141 (DRYVAICKPLHYTTVLTGS). The chain crosses the membrane as a helical span at residues 142–162 (LITKIGMAAVARAVTLMTPLP). The Extracellular portion of the chain corresponds to 163 to 198 (FLLRRFHYCRGPVIAHCYCEHMAVVRLACGDTSFNN). The helical transmembrane segment at 199 to 219 (IYGIAVAMFIVVLDLLFVILS) threads the bilayer. The Cytoplasmic segment spans residues 220–239 (YVFILQAVLQLASQEARYKA). A helical transmembrane segment spans residues 240–260 (FGTCVSHIGAILSTYTPVVIS). The Extracellular portion of the chain corresponds to 261-275 (SVMHRVARHAAPRVH). A helical transmembrane segment spans residues 276–296 (ILLAIFYLLFPPMVNPIIYGV). The Cytoplasmic portion of the chain corresponds to 297–314 (KTKQIREYVLSLFQRKNM).

This sequence belongs to the G-protein coupled receptor 1 family.

The protein resides in the cell membrane. Its function is as follows. Odorant receptor. This is Olfactory receptor 52K1 (OR52K1) from Homo sapiens (Human).